The following is a 337-amino-acid chain: Glycerol-3-phosphate dehydrogenase [NAD(P)+] 2 (337 aa).

NADPH contacts are provided by Thr-11, Trp-12, and Lys-105. Sn-glycerol 3-phosphate-binding residues include Lys-105, Gly-139, and Thr-141. Ala-143 lines the NADPH pocket. The sn-glycerol 3-phosphate site is built by Lys-194, Asp-247, Ser-257, Arg-258, and Asn-259. Lys-194 (proton acceptor) is an active-site residue. Position 258 (Arg-258) interacts with NADPH. NADPH contacts are provided by Val-282 and Glu-284.

It belongs to the NAD-dependent glycerol-3-phosphate dehydrogenase family.

The protein resides in the cytoplasm. The catalysed reaction is sn-glycerol 3-phosphate + NAD(+) = dihydroxyacetone phosphate + NADH + H(+). The enzyme catalyses sn-glycerol 3-phosphate + NADP(+) = dihydroxyacetone phosphate + NADPH + H(+). Its pathway is membrane lipid metabolism; glycerophospholipid metabolism. Functionally, catalyzes the reduction of the glycolytic intermediate dihydroxyacetone phosphate (DHAP) to sn-glycerol 3-phosphate (G3P), the key precursor for phospholipid synthesis. This Lactobacillus delbrueckii subsp. bulgaricus (strain ATCC 11842 / DSM 20081 / BCRC 10696 / JCM 1002 / NBRC 13953 / NCIMB 11778 / NCTC 12712 / WDCM 00102 / Lb 14) protein is Glycerol-3-phosphate dehydrogenase [NAD(P)+] 2.